The following is a 382-amino-acid chain: Mannitol-1-phosphate 5-dehydrogenase (382 aa).

3–14 serves as a coordination point for NAD(+); it reads ALHFGAGNIGRG.

It belongs to the mannitol dehydrogenase family.

The catalysed reaction is D-mannitol 1-phosphate + NAD(+) = beta-D-fructose 6-phosphate + NADH + H(+). This Salmonella typhi protein is Mannitol-1-phosphate 5-dehydrogenase.